A 396-amino-acid chain; its full sequence is Putative transposase y4rJ (396 aa).

This sequence belongs to the transposase 20 family.

This Sinorhizobium fredii (strain NBRC 101917 / NGR234) protein is Putative transposase y4rJ.